Consider the following 160-residue polypeptide: Major pollen allergen Bet v 1-J (160 aa).

4 residues coordinate brassinolide: Lys-55, Tyr-82, Tyr-84, and Asn-101. Hydrophobic ligand pocket regions lie at residues 116-118 (KIN) and 133-141 (QIKASKEMG).

The protein belongs to the BetVI family. In terms of tissue distribution, pollen.

The protein localises to the cytoplasm. In terms of biological role, may be a general steroid carrier protein. This is Major pollen allergen Bet v 1-J from Betula pendula (European white birch).